The primary structure comprises 352 residues: C-C chemokine receptor type 5 (352 aa).

Over Met-1–Ala-30 the chain is Extracellular. Tyr-3 carries the sulfotyrosine modification. Residues Ser-6 and Ser-7 are each glycosylated (O-linked (GalNAc...) serine). Residues Tyr-10, Tyr-14, and Tyr-15 each carry the sulfotyrosine modification. Cystine bridges form between Cys-20/Cys-269 and Cys-101/Cys-178. The helical transmembrane segment at Arg-31–Cys-58 threads the bilayer. Residues Lys-59 to Tyr-68 are Cytoplasmic-facing. A helical membrane pass occupies residues Leu-69–Tyr-89. The Extracellular segment spans residues Ala-90–Gln-102. The chain crosses the membrane as a helical span at residues Leu-103–Ile-124. Residues Asp-125–Thr-141 lie on the Cytoplasmic side of the membrane. Residues Val-142–Phe-166 form a helical membrane-spanning segment. The Extracellular segment spans residues Thr-167–Ile-198. A helical transmembrane segment spans residues Val-199–Leu-218. At Lys-219 to Arg-235 the chain is on the cytoplasmic side. Residues Leu-236–Phe-260 form a helical membrane-spanning segment. The Extracellular portion of the chain corresponds to Gln-261–Gln-277. A helical membrane pass occupies residues Ala-278–Gly-301. Residues Glu-302 to Leu-352 lie on the Cytoplasmic side of the membrane. Residues Cys-321, Cys-323, and Cys-324 are each lipidated (S-palmitoyl cysteine). Ser-336, Ser-337, Ser-342, and Ser-349 each carry phosphoserine; by BARK1.

It belongs to the G-protein coupled receptor 1 family. As to quaternary structure, interacts with PRAF2. Efficient ligand binding to CCL3/MIP-1alpha and CCL4/MIP-1beta requires sulfation, O-glycosylation and sialic acid modifications. Glycosylation on Ser-6 is required for efficient binding of CCL4. Interacts with GRK2. Interacts with ARRB1 and ARRB2. Interacts with CNIH4. Interacts with S100A4; this interaction stimulates T-lymphocyte chemotaxis. In terms of processing, sulfated on at least 2 of the N-terminal tyrosines. Sulfation is required for efficient binding of the chemokines, CCL3 and CCL4. Palmitoylation in the C-terminal is important for cell surface expression. Post-translationally, phosphorylation on serine residues in the C-terminal is stimulated by binding CC chemokines especially by APO-RANTES. In terms of processing, O-glycosylated, but not N-glycosylated. Ser-6 appears to be the major site even if Ser-7 may be also O-glycosylated. Also sialylated glycans present which contribute to chemokine binding. Thr-16 and Ser-17 may also be glycosylated and, if so, with small moieties such as a T-antigen.

The protein localises to the cell membrane. Functionally, receptor for a number of inflammatory CC-chemokines including CCL3/MIP-1-alpha, CCL4/MIP-1-beta and RANTES and subsequently transduces a signal by increasing the intracellular calcium ion level. May play a role in the control of granulocytic lineage proliferation or differentiation. Participates in T-lymphocyte migration to the infection site by acting as a chemotactic receptor. The protein is C-C chemokine receptor type 5 (CCR5) of Chlorocebus pygerythrus (Vervet monkey).